Reading from the N-terminus, the 68-residue chain is Conotoxin Em11.5 (68 aa).

A signal peptide spans 1–26 (MMFRLTSVGCFLLVIACLNLFQVVLT). 4 disulfide bridges follow: cysteine 29/cysteine 43, cysteine 36/cysteine 48, cysteine 42/cysteine 52, and cysteine 47/cysteine 56. Phenylalanine 60 is modified (phenylalanine amide). The propeptide occupies 64 to 68 (ATFQE).

It belongs to the conotoxin I2 superfamily. Expressed by the venom duct.

It localises to the secreted. The chain is Conotoxin Em11.5 from Conus emaciatus (False virgin cone).